The chain runs to 776 residues: Heat shock protein 110 (776 aa).

A disordered region spans residues 741 to 776 (ILNKKKPAAPAPPKKEEPQPAAGDQPQSQPGEMDVD).

It belongs to the heat shock protein 70 family.

The chain is Heat shock protein 110 from Caenorhabditis elegans.